A 130-amino-acid polypeptide reads, in one-letter code: Small ribosomal subunit protein uS12c (130 aa).

This sequence belongs to the universal ribosomal protein uS12 family. In terms of assembly, part of the 30S ribosomal subunit.

Its subcellular location is the plastid. It is found in the chloroplast. Functionally, with S4 and S5 plays an important role in translational accuracy. Located at the interface of the 30S and 50S subunits. The polypeptide is Small ribosomal subunit protein uS12c (rps12) (Tetradesmus obliquus (Green alga)).